The chain runs to 170 residues: Flavodoxin (170 aa).

One can recognise a Flavodoxin-like domain in the interval 4–165 (IGLFFGTQTG…RIQAWVAQLK (162 aa)).

The protein belongs to the flavodoxin family. The cofactor is FMN.

Functionally, low-potential electron donor to a number of redox enzymes. The polypeptide is Flavodoxin (isiB) (Picosynechococcus sp. (strain ATCC 27264 / PCC 7002 / PR-6) (Agmenellum quadruplicatum)).